The primary structure comprises 58 residues: Photosystem II reaction center protein K (58 aa).

Positions 1-21 (MFNAYLDTVLDLSANGTVILA) are excised as a propeptide. A helical membrane pass occupies residues 29–49 (IFDPIVDVMPIIPVFFLLLAF).

It belongs to the PsbK family. In terms of assembly, PSII is composed of 1 copy each of membrane proteins PsbA, PsbB, PsbC, PsbD, PsbE, PsbF, PsbH, PsbI, PsbJ, PsbK, PsbL, PsbM, PsbT, PsbX, PsbY, PsbZ, Psb30/Ycf12, at least 3 peripheral proteins of the oxygen-evolving complex and a large number of cofactors. It forms dimeric complexes.

The protein localises to the plastid. Its subcellular location is the chloroplast thylakoid membrane. One of the components of the core complex of photosystem II (PSII). PSII is a light-driven water:plastoquinone oxidoreductase that uses light energy to abstract electrons from H(2)O, generating O(2) and a proton gradient subsequently used for ATP formation. It consists of a core antenna complex that captures photons, and an electron transfer chain that converts photonic excitation into a charge separation. This Staurastrum punctulatum (Green alga) protein is Photosystem II reaction center protein K.